The chain runs to 311 residues: MSTFSLKIIRIGITLLVVLLAVIAIFKVWAFYTESPWTRDAKFTADVVAIAPDVSGLITDVPVKDNQLVQKGQILFVIDQPRYQQALAEAEADVAYYQTLAAEKQRESGRRQRLGIQAMSQEEIDQSNNVLQTVRHQLAKAVAVRDLAKLDLERTTVRAPAEGWVTNLNVHAGEFINRGATAVALVKKDTFYILAYLEETKLEGVKPGHRAEITPLGSNRILHGTVDSISAGVTNSSSSADSKGLATIDNNLEWVRLAQRVPVKIRLDSEDQQHSYPAGTTATVVITGSTDRDPNQASPIVKLMHRLREFG.

Residues 11–31 (IGITLLVVLLAVIAIFKVWAF) form a helical membrane-spanning segment.

The protein belongs to the membrane fusion protein (MFP) (TC 8.A.1) family.

It is found in the cell inner membrane. Forms an efflux pump with AaeB. This Yersinia enterocolitica serotype O:8 / biotype 1B (strain NCTC 13174 / 8081) protein is p-hydroxybenzoic acid efflux pump subunit AaeA.